Reading from the N-terminus, the 223-residue chain is Cytidylate kinase (223 aa).

G17–T25 contacts ATP.

It belongs to the cytidylate kinase family. Type 1 subfamily.

The protein resides in the cytoplasm. It carries out the reaction CMP + ATP = CDP + ADP. It catalyses the reaction dCMP + ATP = dCDP + ADP. In Bordetella bronchiseptica (strain ATCC BAA-588 / NCTC 13252 / RB50) (Alcaligenes bronchisepticus), this protein is Cytidylate kinase.